The following is a 401-amino-acid chain: Nodal homolog 3-A (401 aa).

The N-terminal stretch at 1–18 is a signal peptide; it reads MAFLNLFFCLVFISPLMA. Positions 19–274 are excised as a propeptide; sequence MPPVLQGRKS…KVNGFRRLRR (256 aa). Residues N168, N337, N341, and N344 are each glycosylated (N-linked (GlcNAc...) asparagine). 2 disulfide bridges follow: C299-C365 and C328-C396.

It belongs to the TGF-beta family. Monomer. The propeptide region interacts with bmp4 in a non-covalent manner. As to expression, expressed in the epithelial layer of the Spemann organizer during gastrulation.

It is found in the secreted. Its function is as follows. Exhibits mesoderm-dorsalizing activity and neural-inducing activity, but lacks mesoderm-inducing activity. Regulates the expression of specific mesodermal and neural genes. Induces convergent extension movements at the embryonic midline by activating the fgf signaling pathway to induce t/bra expression in the organizer region. Acts with wnt11 to induce Spemann organizer cells and induce axis formation. The unprocessed protein antagonizes bmp-signaling. The sequence is that of Nodal homolog 3-A (nodal3-a) from Xenopus laevis (African clawed frog).